A 272-amino-acid chain; its full sequence is Putative phosphoenolpyruvate synthase regulatory protein (272 aa).

152-159 (GVSRCGKT) is an ADP binding site.

This sequence belongs to the pyruvate, phosphate/water dikinase regulatory protein family. PSRP subfamily.

It catalyses the reaction [pyruvate, water dikinase] + ADP = [pyruvate, water dikinase]-phosphate + AMP + H(+). It carries out the reaction [pyruvate, water dikinase]-phosphate + phosphate + H(+) = [pyruvate, water dikinase] + diphosphate. Its function is as follows. Bifunctional serine/threonine kinase and phosphorylase involved in the regulation of the phosphoenolpyruvate synthase (PEPS) by catalyzing its phosphorylation/dephosphorylation. The polypeptide is Putative phosphoenolpyruvate synthase regulatory protein (Pseudomonas fluorescens (strain SBW25)).